Here is a 123-residue protein sequence, read N- to C-terminus: Ribosome-binding factor A (123 aa).

It belongs to the RbfA family. As to quaternary structure, monomer. Binds 30S ribosomal subunits, but not 50S ribosomal subunits or 70S ribosomes.

Its subcellular location is the cytoplasm. One of several proteins that assist in the late maturation steps of the functional core of the 30S ribosomal subunit. Associates with free 30S ribosomal subunits (but not with 30S subunits that are part of 70S ribosomes or polysomes). Required for efficient processing of 16S rRNA. May interact with the 5'-terminal helix region of 16S rRNA. The protein is Ribosome-binding factor A of Trichlorobacter lovleyi (strain ATCC BAA-1151 / DSM 17278 / SZ) (Geobacter lovleyi).